The following is a 305-amino-acid chain: Beta-lactamase ROB-1 (305 aa).

The first 33 residues, 1-33 (MLNKLKIGTLLLLTLTACSPNSVHSVTSNPQPA), serve as a signal peptide directing secretion. Residue S86 is the Acyl-ester intermediate of the active site. 248–250 (KSG) contributes to the substrate binding site.

The protein belongs to the class-A beta-lactamase family.

It catalyses the reaction a beta-lactam + H2O = a substituted beta-amino acid. This is Beta-lactamase ROB-1 (rob1) from Actinobacillus pleuropneumoniae (Haemophilus pleuropneumoniae).